Consider the following 333-residue polypeptide: Adenosine deaminase (333 aa).

H12 and H14 together coordinate Zn(2+). 3 residues coordinate substrate: H14, D16, and G170. H197 contacts Zn(2+). The active-site Proton donor is E200. D278 is a binding site for Zn(2+). D279 is a binding site for substrate.

The protein belongs to the metallo-dependent hydrolases superfamily. Adenosine and AMP deaminases family. Adenosine deaminase subfamily. Requires Zn(2+) as cofactor.

The catalysed reaction is adenosine + H2O + H(+) = inosine + NH4(+). It catalyses the reaction 2'-deoxyadenosine + H2O + H(+) = 2'-deoxyinosine + NH4(+). In terms of biological role, catalyzes the hydrolytic deamination of adenosine and 2-deoxyadenosine. In Photorhabdus laumondii subsp. laumondii (strain DSM 15139 / CIP 105565 / TT01) (Photorhabdus luminescens subsp. laumondii), this protein is Adenosine deaminase.